The chain runs to 244 residues: 1-(5-phosphoribosyl)-5-[(5-phosphoribosylamino)methylideneamino] imidazole-4-carboxamide isomerase (244 aa).

D8 acts as the Proton acceptor in catalysis. Residue D129 is the Proton donor of the active site.

It belongs to the HisA/HisF family.

The protein localises to the cytoplasm. The catalysed reaction is 1-(5-phospho-beta-D-ribosyl)-5-[(5-phospho-beta-D-ribosylamino)methylideneamino]imidazole-4-carboxamide = 5-[(5-phospho-1-deoxy-D-ribulos-1-ylimino)methylamino]-1-(5-phospho-beta-D-ribosyl)imidazole-4-carboxamide. It functions in the pathway amino-acid biosynthesis; L-histidine biosynthesis; L-histidine from 5-phospho-alpha-D-ribose 1-diphosphate: step 4/9. The polypeptide is 1-(5-phosphoribosyl)-5-[(5-phosphoribosylamino)methylideneamino] imidazole-4-carboxamide isomerase (Geobacter sulfurreducens (strain ATCC 51573 / DSM 12127 / PCA)).